Here is a 1273-residue protein sequence, read N- to C-terminus: MVRLREIPRTATFAWSPGAASPLIATGTRAGAVDVDFSNETCLELWDLGLDRQSTGEELQPIAKFDTDSGFNDLAWTPSEDNTRGIIAGALESGSLDLWDADKLINGSSDDAVISRTSKHSGAIKALQFNPRHSNLLATGGAKGELYISDLNNVANPYRLGTAARADDIECLDWNKKVAHILVTGSSAGFVTVWDVKTKKESLTLNNMGRKAVSAVAWDPEKPTKLVTATPLESDPMIYVWDLRNSHAPERVLKGHESGVLSLSWCSHDPDLLLSSGKDNRTLCWNPQTGHAYGEFPVVTNWTFQTRWNPHNPNFFATASFDGKIAVQTVQNTSTDTAQAIADQNQALDGEDFFAKAQTQPQVSSFSLPKAPKWLERPCGATFGFGGRVVSVNLVEKGQRASKIKITPFEVDEAVGQSTETFENALKEGDLRSICETRAANAATEEEKADWKVIQALISENPRKGLAEYLGFQDQSADEAADKLANLGLGKEETNGESPKESRGPGAKKHKRLQSMFDASPEADNFLSDLAASKGAKTNNPFHIFNGSETEADKGITRALLLGDFEKALDVSLKEDRLSDAFMIAICGGQKCIAKAQEHYFSKQTESPNYVRLLASIVGKNLWDVVYNADLSNWKEVMAALCTFAEEKEFADLCDALGDRLEEQIRASDDKSLRKDASFCFLAGSKLEKVVAIWIEELRENEQKALETAANDTSFSIHVRALQGLIEKVTIFRQVTKFQDTERTKESDWKLSNLYDKYIEYADVVATHGRLQVAQKYLDLVPEKHPEAEVARNRIKLATRQPTAQKTQQTTTGRGTPLNKPLPTTNAYQPQRTFSPVATAAAPSPYAPPAPTTNAYAPPAAATNPYAPPAAATNPYAPPAPASNPYAPPGAAAPPQPTNPYAPASGGSYAPTGYQPTPAPSYGAKPLGGSVPPPPRASNQSPATVTTYTTATNLPAWNDLPEGFAKAPTPRRGTPAGAAAPISSPFPNQSPSIAQGPPPPGAPPTQRTPSVPPPPKGTAPPPRVTSPPSAIPPGPTPPPNPYASLPQSPPQLNPGTMGVPAPIPRGPSPYNAPPSMPPPTNRYAPSPAAQAANPQLQARGPVPPPPQAAASPYAPQPPAASQYAPSTPPLQQGPPPASTSRPGTASSQKVTPAPATPKYPPGDRSHIPEDAMPIYEILSADMQRIKGRAPTSFKQQVEDADRRLNLLFDHLNNGDLLKPNTVSDMADLARAIQARDYEAARAIHVDILTNRTDECGQWMVGVKRLISMSKATP.

WD repeat units follow at residues R5–D47, D66–S109, K119–R159, A164–T204, M208–R251, G255–E295, and V298–A338. The stretch at T382 to T407 is one WD 8; interaction with sec13 repeat. 3 disordered regions span residues G488–K509, K796–Q829, and P881–P1168. Residues G490–R503 show a composition bias toward basic and acidic residues. Positions A798–P817 are enriched in low complexity. Pro residues predominate over residues P881–P900. 2 stretches are compositionally biased toward low complexity: residues A943–T952 and A967–P981. Pro residues-rich tracts occupy residues S1010 to L1052 and A1061 to T1080. Low complexity-rich tracts occupy residues A1084–A1098 and A1108–P1125. Residues S1126–A1137 are compositionally biased toward pro residues. The span at S1140–V1150 shows a compositional bias: polar residues.

Belongs to the WD repeat SEC31 family. The COPII coat is composed of at least 5 proteins: the sec23/24 complex, the sec13/31 complex, and the protein sar1. sec13 and sec31 make a 2:2 tetramer that forms the edge element of the COPII outer coat. The tetramer self-assembles in multiple copies to form the complete polyhedral cage. Interacts (via WD 8) with sec13.

It localises to the cytoplasmic vesicle. The protein resides in the COPII-coated vesicle membrane. The protein localises to the endoplasmic reticulum membrane. Functionally, component of the coat protein complex II (COPII) which promotes the formation of transport vesicles from the endoplasmic reticulum (ER). The coat has two main functions, the physical deformation of the endoplasmic reticulum membrane into vesicles and the selection of cargo molecules. The protein is Protein transport protein sec31 (sec31) of Aspergillus oryzae (strain ATCC 42149 / RIB 40) (Yellow koji mold).